A 281-amino-acid polypeptide reads, in one-letter code: Very long chain fatty acid elongase 7 (281 aa).

The residue at position 2 (alanine 2) is an N-acetylalanine. At 2 to 27 (AFSDLTSRTVRLYDNWIKDADPRVED) the chain is on the lumenal side. The chain crosses the membrane as a helical span at residues 28–48 (WLLMSSPLPQTIILGFYVYFV). Topologically, residues 49 to 66 (TSLGPKLMENRKPFELKK) are cytoplasmic. The chain crosses the membrane as a helical span at residues 67–87 (VMITYNFSIVLFSVYMFYEFI). The Lumenal portion of the chain corresponds to 88–115 (MSGWGTGYSFRCDIVDYSQSPTALRMVR). Cysteine 99 and cysteine 231 form a disulfide bridge. Residues 116–136 (TCWLYYFSKFIELLDTIFFIL) traverse the membrane as a helical segment. Residues lysine 124, arginine 137, lysine 139, glutamine 142, and histidine 147 each coordinate 3-oxoeicosanoyl-CoA. At 137–142 (RKKNSQ) the chain is on the cytoplasmic side. Residues 143 to 162 (VTFLHVFHHTIMPWTWWFGV) form a helical membrane-spanning segment. The HxxHH motif motif lies at 147 to 151 (HVFHH). Residue histidine 150 is the Nucleophile of the active site. Over 163–171 (KFAAGGLGT) the chain is Lumenal. The chain crosses the membrane as a helical span at residues 172-194 (FHAFLNTAVHVVMYSYYGLCALG). The 3-oxoeicosanoyl-CoA site is built by tyrosine 187, lysine 204, threonine 208, and glutamine 211. At 195–206 (PDYQKYLWWKKY) the chain is on the cytoplasmic side. A helical membrane pass occupies residues 207–227 (LTSLQLIQFVLITIHISQFFF). The Lumenal segment spans residues 228-236 (MEDCKYQFP). A helical transmembrane segment spans residues 237-257 (VFQYIIMSYGCIFLLLFLHFW). Residues 258-281 (YRAYTKGQRLPKTVKHGICKNKDH) are Cytoplasmic-facing. Arginine 266 serves as a coordination point for 3-oxoeicosanoyl-CoA. Residues 277 to 281 (KNKDH) carry the Di-lysine motif motif.

Belongs to the ELO family. ELOVL7 subfamily. In terms of assembly, homodimer. Interacts with TECR.

It localises to the endoplasmic reticulum membrane. The catalysed reaction is a very-long-chain acyl-CoA + malonyl-CoA + H(+) = a very-long-chain 3-oxoacyl-CoA + CO2 + CoA. The enzyme catalyses eicosanoyl-CoA + malonyl-CoA + H(+) = 3-oxodocosanoyl-CoA + CO2 + CoA. It catalyses the reaction (5Z,8Z,11Z,14Z)-eicosatetraenoyl-CoA + malonyl-CoA + H(+) = (7Z,10Z,13Z,16Z)-3-oxodocosatetraenoyl-CoA + CO2 + CoA. It carries out the reaction (6Z,9Z,12Z)-octadecatrienoyl-CoA + malonyl-CoA + H(+) = (8Z,11Z,14Z)-3-oxoeicosatrienoyl-CoA + CO2 + CoA. The catalysed reaction is (9Z,12Z)-octadecadienoyl-CoA + malonyl-CoA + H(+) = (11Z,14Z)-3-oxoicosa-11,14-dienoyl-CoA + CO2 + CoA. The enzyme catalyses (9Z)-octadecenoyl-CoA + malonyl-CoA + H(+) = 3-oxo-(11Z)-eicosenoyl-CoA + CO2 + CoA. It catalyses the reaction octadecanoyl-CoA + malonyl-CoA + H(+) = 3-oxoeicosanoyl-CoA + CO2 + CoA. It carries out the reaction hexadecanoyl-CoA + malonyl-CoA + H(+) = 3-oxooctadecanoyl-CoA + CO2 + CoA. The catalysed reaction is (9Z,12Z,15Z)-octadecatrienoyl-CoA + malonyl-CoA + H(+) = (11Z,14Z,17Z)-3-oxoeicosatrienoyl-CoA + CO2 + CoA. It participates in lipid metabolism; fatty acid biosynthesis. Its function is as follows. Catalyzes the first and rate-limiting reaction of the four reactions that constitute the long-chain fatty acids elongation cycle. This endoplasmic reticulum-bound enzymatic process allows the addition of 2 carbons to the chain of long- and very long-chain fatty acids (VLCFAs) per cycle. Condensing enzyme with higher activity toward C18 acyl-CoAs, especially C18:3(n-3) acyl-CoAs and C18:3(n-6)-CoAs. Also active toward C20:4-, C18:0-, C18:1-, C18:2- and C16:0-CoAs, and weakly toward C20:0-CoA. Little or no activity toward C22:0-, C24:0-, or C26:0-CoAs. May participate in the production of saturated and polyunsaturated VLCFAs of different chain lengths that are involved in multiple biological processes as precursors of membrane lipids and lipid mediators. The protein is Very long chain fatty acid elongase 7 of Bos taurus (Bovine).